The chain runs to 658 residues: Probable CoA ligase CCL6 (658 aa).

ATP contacts are provided by residues 226–234 (TSGATGEPK), 411–416 (QGYGLT), D497, 509–512 (IIDR), and K632. Positions 298-411 (DIRFLMDDLQ…RVTSCAALSQ (114 aa)) are SBD1. An SBD2 region spans residues 412–477 (GYGLTESCGG…LRGTTLFSGY (66 aa)).

This sequence belongs to the ATP-dependent AMP-binding enzyme family. In terms of tissue distribution, mostly expressed in glandular trichomes (lupulin glands) after flowering, and, to a lower extent, in stems, leaves, cones and flowers.

It localises to the cytoplasm. Its subcellular location is the cytosol. The sequence is that of Probable CoA ligase CCL6 from Humulus lupulus (European hop).